The primary structure comprises 382 residues: F-box/LRR-repeat/kelch-repeat protein At1g09650 (382 aa).

The 46-residue stretch at 7–52 (CLMMESLPHEVVECILERLDADPLLRFKAVSKQWKSTIESPFFQRR) folds into the F-box domain. The LRR 1 repeat unit spans residues 78 to 101 (IEALTTLVLGSSSSVKIPTPWEEE). The Kelch 1 repeat unit spans residues 180–227 (PVWLYNSIEIGLENATTCEVFDFSTNAWRYVSPAAPYRIVGCPAPVCV). Residues 239-262 (ETKILSFDLHTETFQVVSKAPFAN) form an LRR 2 repeat. The Kelch 2 repeat unit spans residues 270 to 319 (MCNLDNRLCVSEMKLPNQVIWSFNSGNKTWHKMCSINLDITSRWFGPTQV).

This is F-box/LRR-repeat/kelch-repeat protein At1g09650 from Arabidopsis thaliana (Mouse-ear cress).